A 3707-amino-acid chain; its full sequence is CUB and sushi domain-containing protein 3 (3707 aa).

A disordered region spans residues 1–21; sequence MKGIRKGESRAKESKPWEPGK. The Cytoplasmic segment spans residues 1-42; that stretch reads MKGIRKGESRAKESKPWEPGKRRCAKCGRLDFILMKKMGIKS. A helical transmembrane segment spans residues 43–63; it reads GFTFWNLVFLLTVSCVKGFIY. The Extracellular segment spans residues 64–3630; the sequence is TCGGTLKGLN…NQPHGTNSSS (3567 aa). 4 disulfides stabilise this stretch: Cys65/Cys91, Cys178/Cys218, Cys204/Cys235, and Cys241/Cys267. The CUB 1 domain maps to 65–173; the sequence is CGGTLKGLNG…HGFKVYYEEL (109 aa). Asn73 and Asn90 each carry an N-linked (GlcNAc...) asparagine glycan. The Sushi 1 domain maps to 176–237; that stretch reads SSCGNPGVPP…WDFPVPICRA (62 aa). In terms of domain architecture, CUB 2 spans 241-345; that stretch reads CGGTMRGSSG…RGFSAPYQGS (105 aa). Asn361 and Asn409 each carry an N-linked (GlcNAc...) asparagine glycan. The tract at residues 394–435 is disordered; it reads QRVQVTSLRNSGLDPNTSKDGLSPHPADTQSTRRRPRHAEQI. Positions 396-413 are enriched in polar residues; it reads VQVTSLRNSGLDPNTSKD. The Sushi 2 domain maps to 484–545; sequence NLCPDPGEPE…WSDHRPVCKV (62 aa). 6 disulfide bridges follow: Cys486/Cys526, Cys512/Cys543, Cys548/Cys574, Cys664/Cys704, Cys690/Cys717, and Cys721/Cys747. A CUB 3 domain is found at 548 to 659; that stretch reads CGSNLQGPSG…VGFKVNYKEI (112 aa). The Sushi 3 domain maps to 662-719; it reads ESCGDPGTPLYGIREGDGFSNRDVLRFECQFGFELIGEKSIVCQENNQWSANIPICIF. The 109-residue stretch at 721–829 folds into the CUB 4 domain; sequence CLSNFTAPMG…RGFNITYNTF (109 aa). N-linked (GlcNAc...) asparagine glycans are attached at residues Asn724 and Asn823. The Sushi 4 domain occupies 832-893; the sequence is NECPDPGIPI…WSGLIPKCGA (62 aa). Disulfide bonds link Cys834/Cys875, Cys860/Cys891, and Cys895/Cys921. Positions 895–1003 constitute a CUB 5 domain; sequence CGGHFSAPSG…NGFKIHYESV (109 aa). The N-linked (GlcNAc...) asparagine glycan is linked to Asn966. One can recognise a Sushi 5 domain in the interval 1008-1065; the sequence is YSCLDPGIPVHGRRYGHDFSIGSTVSFSCDSGYRLSHEEPLLCEKNHWWSHPLPTCDA. Cystine bridges form between Cys1010–Cys1050, Cys1036–Cys1063, and Cys1067–Cys1093. One can recognise a CUB 6 domain in the interval 1067–1177; it reads CGGDVRGPSG…EGFNITFSEY (111 aa). Residues Asn1092, Asn1126, and Asn1171 are each glycosylated (N-linked (GlcNAc...) asparagine). Residues 1180-1239 enclose the Sushi 6 domain; that stretch reads EPCEDPGIPQYGSRIGFNFGIGDTLTFSCSSGYRLEGTSEIICLGGGRRVWSAPLPRCVA. 3 cysteine pairs are disulfide-bonded: Cys1182–Cys1222, Cys1208–Cys1237, and Cys1241–Cys1267. One can recognise a CUB 7 domain in the interval 1241–1349; sequence CGASATNNEG…EGFQLVYTSF (109 aa). N-linked (GlcNAc...) asparagine glycosylation is present at Asn1280. Residues 1352-1412 form the Sushi 7 domain; the sequence is SHCEDPGIPQ…WDYPLPSCIA (61 aa). Disulfide bonds link Cys1354–Cys1395, Cys1381–Cys1410, Cys1414–Cys1441, Cys1528–Cys1568, Cys1554–Cys1584, Cys1588–Cys1614, Cys1701–Cys1741, Cys1727–Cys1758, Cys1762–Cys1788, Cys1878–Cys1918, Cys1904–Cys1935, and Cys1939–Cys1965. The CUB 8 domain occupies 1414–1523; sequence CGGRFKGESS…SGFAIQFSSS (110 aa). A Sushi 8 domain is found at 1526–1586; the sequence is TACRDPGVPM…WQPSPPVCIA (61 aa). Residue Asn1536 is glycosylated (N-linked (GlcNAc...) asparagine). The 109-residue stretch at 1588–1696 folds into the CUB 9 domain; sequence CGGNLTGSSG…TGFHLEYKAK (109 aa). N-linked (GlcNAc...) asparagine glycosylation is found at Asn1591 and Asn1709. The Sushi 9 domain maps to 1699-1760; that stretch reads ESCFDPGNIM…WNRALPSCHA (62 aa). The 109-residue stretch at 1762–1870 folds into the CUB 10 domain; it reads CGSRSTGSEG…KGFHFVYQAV (109 aa). Asn1781 is a glycosylation site (N-linked (GlcNAc...) asparagine). The Sushi 10 domain maps to 1876-1937; it reads TQCSSVPEPR…WNDSLPTCIV (62 aa). N-linked (GlcNAc...) asparagine glycosylation occurs at Asn1929. One can recognise a CUB 11 domain in the interval 1939-2047; that stretch reads CGGILTKRKG…AGFHLEYTAI (109 aa). N-linked (GlcNAc...) asparagine glycosylation occurs at Asn2019. The Sushi 11 domain occupies 2050 to 2109; that stretch reads DSCPEPQTPSSGIKIGDRYMVGDVVSFQCDQGYSLQGHSHITCMPGPVRRWNYPIPICLA. 3 disulfides stabilise this stretch: Cys2052–Cys2092, Cys2078–Cys2107, and Cys2111–Cys2137. A CUB 12 domain is found at 2111–2219; it reads CGGAMSDFSG…QGFHIVYQAY (109 aa). A glycan (N-linked (GlcNAc...) asparagine) is linked at Asn2155. One can recognise a Sushi 12 domain in the interval 2222-2281; the sequence is QSCPDPRPFRNGFVIGNDFTVGQTISFECFPGYTLIGNSALTCLHGVSRNWNHPLPRCEA. Intrachain disulfides connect Cys2224/Cys2264, Cys2250/Cys2279, and Cys2283/Cys2309. The region spanning 2283–2394 is the CUB 13 domain; it reads CGGNITAMNG…LSYHAYQLRV (112 aa). N-linked (GlcNAc...) asparagine glycans are attached at residues Asn2286, Asn2291, and Asn2324. Residues 2393-2454 form the Sushi 13 domain; the sequence is RVCQPPPPVP…MDGAPPVCQV (62 aa). 3 disulfides stabilise this stretch: Cys2395–Cys2437, Cys2423–Cys2452, and Cys2456–Cys2484. The 112-residue stretch at 2456–2567 folds into the CUB 14 domain; sequence CPANELRLDS…KGFRIRYIAF (112 aa). N-linked (GlcNAc...) asparagine glycosylation is found at Asn2495 and Asn2537. 15 Sushi domains span residues 2567-2629, 2630-2691, 2692-2756, 2757-2814, 2815-2872, 2873-2930, 2931-2992, 2993-3050, 3054-3111, 3112-3170, 3171-3230, 3231-3288, 3289-3346, 3350-3408, and 3409-3468; these read FYCS…ACQA, ISCG…RCVV, VTCP…YCQI, ISCG…RCLA, GHCG…SCVP, VSCG…MCKV, VNCS…ECIM, IDCG…HCSG, GTCG…ECKA, VQCG…NCTI, ISCG…TCRA, VTCP…QCLP, KFCG…HCIE, TSCE…ECIP, and HSCK…ICEA. 12 disulfides stabilise this stretch: Cys2569–Cys2610, Cys2596–Cys2627, Cys2632–Cys2674, Cys2658–Cys2689, Cys2694–Cys2739, Cys2725–Cys2754, Cys2759–Cys2799, Cys2785–Cys2812, Cys2817–Cys2857, Cys2843–Cys2870, Cys2875–Cys2915, and Cys2901–Cys2928. Residues Asn2711 and Asn2742 are each glycosylated (N-linked (GlcNAc...) asparagine). N-linked (GlcNAc...) asparagine glycosylation is present at Asn2862. N-linked (GlcNAc...) asparagine glycans are attached at residues Asn2932 and Asn2952. Disulfide bonds link Cys2933–Cys2977, Cys2963–Cys2990, Cys2995–Cys3035, Cys3021–Cys3048, Cys3056–Cys3096, Cys3082–Cys3109, Cys3114–Cys3155, Cys3141–Cys3168, Cys3173–Cys3215, Cys3199–Cys3228, Cys3233–Cys3273, Cys3259–Cys3286, Cys3291–Cys3331, Cys3317–Cys3344, Cys3352–Cys3393, Cys3379–Cys3406, Cys3411–Cys3453, and Cys3438–Cys3466. Residue Asn3099 is glycosylated (N-linked (GlcNAc...) asparagine). 5 N-linked (GlcNAc...) asparagine glycosylation sites follow: Asn3158, Asn3167, Asn3194, Asn3208, and Asn3218. An N-linked (GlcNAc...) asparagine glycan is attached at Asn3276. The N-linked (GlcNAc...) asparagine glycan is linked to Asn3364. 5 N-linked (GlcNAc...) asparagine glycosylation sites follow: Asn3522, Asn3529, Asn3612, Asn3618, and Asn3627. A helical membrane pass occupies residues 3631 to 3651; the sequence is VAIAILVPFFALIFAGFGFYL. Residues 3652-3707 lie on the Cytoplasmic side of the membrane; the sequence is YKQRTAPKTQYTGCSVHENNNGQAAFENPMYDTNAKSVEGKAVRFDPNLNTVCTMV.

The protein belongs to the CSMD family. In terms of tissue distribution, weakly expressed in most tissues, except in brain. Expressed at intermediate level in brain, including cerebellum, substantia nigra, thalamus, spinal cord, hippocampus and fetal brain. Also expressed in testis.

It localises to the cell membrane. Functionally, involved in dendrite development. This is CUB and sushi domain-containing protein 3 (CSMD3) from Homo sapiens (Human).